The following is a 362-amino-acid chain: 3-dehydroquinate synthase (362 aa).

NAD(+)-binding positions include 71 to 76, 105 to 109, 129 to 130, Lys-142, Lys-151, and 169 to 172; these read DGEQYK, GVVGD, TT, and CLKT. 3 residues coordinate Zn(2+): Glu-184, His-247, and His-264.

This sequence belongs to the sugar phosphate cyclases superfamily. Dehydroquinate synthase family. Requires Co(2+) as cofactor. Zn(2+) serves as cofactor. The cofactor is NAD(+).

It is found in the cytoplasm. The catalysed reaction is 7-phospho-2-dehydro-3-deoxy-D-arabino-heptonate = 3-dehydroquinate + phosphate. It functions in the pathway metabolic intermediate biosynthesis; chorismate biosynthesis; chorismate from D-erythrose 4-phosphate and phosphoenolpyruvate: step 2/7. In terms of biological role, catalyzes the conversion of 3-deoxy-D-arabino-heptulosonate 7-phosphate (DAHP) to dehydroquinate (DHQ). In Escherichia coli (strain K12 / MC4100 / BW2952), this protein is 3-dehydroquinate synthase.